The chain runs to 481 residues: Proline--tRNA ligase (481 aa).

Belongs to the class-II aminoacyl-tRNA synthetase family. ProS type 3 subfamily. In terms of assembly, homodimer.

It localises to the cytoplasm. It catalyses the reaction tRNA(Pro) + L-proline + ATP = L-prolyl-tRNA(Pro) + AMP + diphosphate. Catalyzes the attachment of proline to tRNA(Pro) in a two-step reaction: proline is first activated by ATP to form Pro-AMP and then transferred to the acceptor end of tRNA(Pro). In Pelodictyon phaeoclathratiforme (strain DSM 5477 / BU-1), this protein is Proline--tRNA ligase.